The chain runs to 197 residues: Peptide deformylase (197 aa).

Residues Cys-106 and His-148 each coordinate Fe cation. The active site involves Glu-149. His-152 provides a ligand contact to Fe cation.

This sequence belongs to the polypeptide deformylase family. It depends on Fe(2+) as a cofactor.

The catalysed reaction is N-terminal N-formyl-L-methionyl-[peptide] + H2O = N-terminal L-methionyl-[peptide] + formate. In terms of biological role, removes the formyl group from the N-terminal Met of newly synthesized proteins. Requires at least a dipeptide for an efficient rate of reaction. N-terminal L-methionine is a prerequisite for activity but the enzyme has broad specificity at other positions. This chain is Peptide deformylase, found in Mycobacterium leprae (strain TN).